The primary structure comprises 633 residues: uncharacterized protein (633 aa).

This is an uncharacterized protein from Acanthamoeba polyphaga mimivirus (APMV).